We begin with the raw amino-acid sequence, 130 residues long: Cystatin domain-containing protein 1 (130 aa).

The N-terminal stretch at 1 to 23 (MSWKVPMLVGLVVLGTHIWTINK) is a signal peptide. Residues 37-116 (ASVEFAVAQF…CVFQVDARPW (80 aa)) form the Cystatin domain. 2 disulfides stabilise this stretch: cysteine 84-cysteine 94 and cysteine 107-cysteine 127.

This sequence belongs to the cystatin family.

The protein localises to the secreted. Its function is as follows. May play a specialized role in spermatogenesis. The sequence is that of Cystatin domain-containing protein 1 from Rattus norvegicus (Rat).